Here is a 244-residue protein sequence, read N- to C-terminus: NAD(P)H-hydrate epimerase (244 aa).

Residues 35–240 (IREIDSLAME…SIGVPLELLR (206 aa)) enclose the YjeF N-terminal domain. 82-86 (NNGGD) serves as a coordination point for (6S)-NADPHX. Residues Asn-83 and Asp-150 each contribute to the K(+) site. (6S)-NADPHX contacts are provided by residues 154–160 (GTGAKPP), Tyr-165, and Asp-183. Residue Thr-186 participates in K(+) binding.

Belongs to the NnrE/AIBP family. The cofactor is K(+).

It carries out the reaction (6R)-NADHX = (6S)-NADHX. It catalyses the reaction (6R)-NADPHX = (6S)-NADPHX. Its function is as follows. Catalyzes the epimerization of the S- and R-forms of NAD(P)HX, a damaged form of NAD(P)H that is a result of enzymatic or heat-dependent hydration. This is a prerequisite for the S-specific NAD(P)H-hydrate dehydratase to allow the repair of both epimers of NAD(P)HX. In Rhodopirellula baltica (strain DSM 10527 / NCIMB 13988 / SH1), this protein is NAD(P)H-hydrate epimerase.